The following is a 404-amino-acid chain: RNA exonuclease 3 (404 aa).

The 147-residue stretch at 243–389 (VLSLDCEMAF…QDAIATMDVV (147 aa)) folds into the Exonuclease domain.

The protein belongs to the REXO1/REXO3 family.

It is found in the cytoplasm. Its subcellular location is the nucleus. 3' to 5' exoribonuclease required for proper 3' end maturation of MRP RNA and of the U5L snRNA. This chain is RNA exonuclease 3 (REX3), found in Saccharomyces cerevisiae (strain ATCC 204508 / S288c) (Baker's yeast).